Reading from the N-terminus, the 207-residue chain is Holliday junction branch migration complex subunit RuvA (207 aa).

A domain I region spans residues 1-64 (MISYIKGELA…EDECSLFGFL (64 aa)). The segment at 65-143 (TRDDLSMFKM…LDEVFESALS (79 aa)) is domain II. Residues 144-155 (KNKKADNNSNVS) are flexible linker. The tract at residues 156–207 (NVMMIRNDAVEALVSLGYSSKDALVAVKEVEDIENKDSETVLKEALKKLVKF) is domain III.

Belongs to the RuvA family. In terms of assembly, homotetramer. Forms an RuvA(8)-RuvB(12)-Holliday junction (HJ) complex. HJ DNA is sandwiched between 2 RuvA tetramers; dsDNA enters through RuvA and exits via RuvB. An RuvB hexamer assembles on each DNA strand where it exits the tetramer. Each RuvB hexamer is contacted by two RuvA subunits (via domain III) on 2 adjacent RuvB subunits; this complex drives branch migration. In the full resolvosome a probable DNA-RuvA(4)-RuvB(12)-RuvC(2) complex forms which resolves the HJ.

Its subcellular location is the cytoplasm. Functionally, the RuvA-RuvB-RuvC complex processes Holliday junction (HJ) DNA during genetic recombination and DNA repair, while the RuvA-RuvB complex plays an important role in the rescue of blocked DNA replication forks via replication fork reversal (RFR). RuvA specifically binds to HJ cruciform DNA, conferring on it an open structure. The RuvB hexamer acts as an ATP-dependent pump, pulling dsDNA into and through the RuvAB complex. HJ branch migration allows RuvC to scan DNA until it finds its consensus sequence, where it cleaves and resolves the cruciform DNA. The polypeptide is Holliday junction branch migration complex subunit RuvA (Lachnospira eligens (strain ATCC 27750 / DSM 3376 / VPI C15-48 / C15-B4) (Eubacterium eligens)).